We begin with the raw amino-acid sequence, 95 residues long: Fungal defensin plectasin (95 aa).

Positions 1–23 (MQFTTILSIGITVFGLLNTGAFA) are cleaved as a signal peptide. A propeptide spanning residues 24 to 55 (APQPVPEAYAVSDPEAHPDDFAGMDANQLQKR) is cleaved from the precursor. Positions 57, 58, and 59 each coordinate beta-D-GlcNAc-(1-&gt;4)-Mur2Ac(oyl-L-Ala-gamma-D-Glu-L-Lys-D-Ala-D-Ala)-di-trans,octa-cis-undecaprenyl diphosphate. 3 disulfides stabilise this stretch: C59–C85, C70–C92, and C74–C94. Residues 61-64 (GPWD) are binds to membrane interface. Beta-D-GlcNAc-(1-&gt;4)-Mur2Ac(oyl-L-Ala-gamma-D-Glu-L-Lys-D-Ala-D-Ala)-di-trans,octa-cis-undecaprenyl diphosphate-binding residues include D67, H73, Y84, A86, G88, C92, and K93. The segment at 86–92 (AKGGFVC) is binds to membrane interface.

Belongs to the invertebrate defensin family. Type 2 subfamily.

It is found in the secreted. The protein localises to the host cell membrane. Functionally, antimicrobial peptide that potently acts against several species of Gram-positive bacteria. It selectively inhibits peptidoglycan biosynthesis through complex formation with the cell wall precursor lipid II (1:1 molar ratio) thus inhibiting cell wall synthesis. It does not disrupt cell membranes. Is especially active against numerous clinical isolates of S.pneumoniae, including all 90 different serotypes and isolates resistant to clinically used antibiotics. In vitro, shows considerable selectivity for bacteria over mammalian cells. The peptide synthesized in D-amino acids does not show antibacterial activity. In vitro, acts on voltage-gated potassium channels by moderately inhibiting mammalian Kv1.3/KCNA3 (IC(50)=2.8 uM), and moderately inhibiting others potassium channels. The sequence is that of Fungal defensin plectasin (DEF) from Pseudoplectania nigrella (Ebony cup).